The following is a 124-amino-acid chain: MPTIKQLIRKKRQPNLNVTKSPALRGCPQRRGTCTRVYTITPKKPNSALRKVARVRLTSGIEITAYIPGIGHNLQEHSSVLVRGGRVKDLPGVRYHIIRGTLDAVGVKDRQQGRSKYGVKIKNK.

This sequence belongs to the universal ribosomal protein uS12 family. In terms of assembly, part of the 30S ribosomal subunit.

The protein resides in the plastid. Its function is as follows. With S4 and S5 plays an important role in translational accuracy. Located at the interface of the 30S and 50S subunits. This chain is Small ribosomal subunit protein uS12cz/uS12cy (rps12-A), found in Epifagus virginiana (Beechdrops).